Reading from the N-terminus, the 273-residue chain is Undecaprenyl-diphosphatase (273 aa).

The next 7 membrane-spanning stretches (helical) occupy residues 6-26 (SLLVAAILGVVEGLTEFLPVS), 45-65 (AKTFEVVIQLGSILAVVVMFW), 90-110 (LTLIHILLGMIPAVVLGLLFH), 116-136 (LFNPINVMYALVVGGLLLIAA), 190-210 (YAASEFSFLLAVPMMMGATAL), 222-242 (GDIPMFAVGFITAFVVALVAI), and 252-272 (ISFIPFAIYRFIVAAAVYVVF).

This sequence belongs to the UppP family.

It localises to the cell inner membrane. It catalyses the reaction di-trans,octa-cis-undecaprenyl diphosphate + H2O = di-trans,octa-cis-undecaprenyl phosphate + phosphate + H(+). In terms of biological role, catalyzes the dephosphorylation of undecaprenyl diphosphate (UPP). Confers resistance to bacitracin. The sequence is that of Undecaprenyl-diphosphatase from Escherichia fergusonii (strain ATCC 35469 / DSM 13698 / CCUG 18766 / IAM 14443 / JCM 21226 / LMG 7866 / NBRC 102419 / NCTC 12128 / CDC 0568-73).